A 292-amino-acid chain; its full sequence is uncharacterized protein (292 aa).

The signal sequence occupies residues Met1–Gly21. The tract at residues Met1–Leu30 is disordered.

This is an uncharacterized protein from Treponema pallidum (strain Nichols).